Consider the following 501-residue polypeptide: Putative antiporter subunit mnhD2 (501 aa).

A run of 14 helical transmembrane segments spans residues 4–24, 33–53, 79–99, 109–129, 131–151, 162–182, 207–227, 245–265, 274–294, 309–329, 334–354, 369–389, 409–429, and 452–472; these read SNLL…LVFI, IFSI…LIYV, LSLL…AYGF, YYLP…FLTA, LFNI…LITL, IIYV…VGLL, IVIV…LVLF, FAAL…TLIF, PLLV…VLAY, IGFI…GAIF, DIVV…ITGL, FFGV…PFSG, LALM…IFFV, and NLIG…PLLF.

The protein belongs to the CPA3 antiporters (TC 2.A.63) subunit D family. As to quaternary structure, may form a heterooligomeric complex that consists of seven subunits: mnhA2, mnhB2, mnhC2, mnhD2, mnhE2, mnhF2 and mnhG2.

It is found in the cell membrane. This chain is Putative antiporter subunit mnhD2 (mnhD2), found in Staphylococcus saprophyticus subsp. saprophyticus (strain ATCC 15305 / DSM 20229 / NCIMB 8711 / NCTC 7292 / S-41).